The primary structure comprises 272 residues: NAD kinase (272 aa).

Residue D50 is the Proton acceptor of the active site. NAD(+)-binding positions include 50–51, 126–127, R152, D154, 165–170, and A189; these read DG, NE, and TAYNKS.

The protein belongs to the NAD kinase family. The cofactor is a divalent metal cation.

It localises to the cytoplasm. The catalysed reaction is NAD(+) + ATP = ADP + NADP(+) + H(+). Its function is as follows. Involved in the regulation of the intracellular balance of NAD and NADP, and is a key enzyme in the biosynthesis of NADP. Catalyzes specifically the phosphorylation on 2'-hydroxyl of the adenosine moiety of NAD to yield NADP. This Streptococcus pneumoniae (strain Hungary19A-6) protein is NAD kinase.